Consider the following 500-residue polypeptide: Glycerol kinase (500 aa).

Residue Thr12 coordinates ADP. Residues Thr12, Thr13, and Ser14 each contribute to the ATP site. Position 12 (Thr12) interacts with sn-glycerol 3-phosphate. An ADP-binding site is contributed by Arg16. The sn-glycerol 3-phosphate site is built by Arg82, Glu83, Tyr134, and Asp244. Arg82, Glu83, Tyr134, Asp244, and Gln245 together coordinate glycerol. ADP-binding residues include Thr266 and Gly309. ATP contacts are provided by Thr266, Gly309, Gln313, and Gly410. ADP-binding residues include Gly410 and Asn414.

Belongs to the FGGY kinase family. In terms of assembly, homotetramer and homodimer (in equilibrium).

The enzyme catalyses glycerol + ATP = sn-glycerol 3-phosphate + ADP + H(+). Its pathway is polyol metabolism; glycerol degradation via glycerol kinase pathway; sn-glycerol 3-phosphate from glycerol: step 1/1. Its activity is regulated as follows. Activated by phosphorylation and inhibited by fructose 1,6-bisphosphate (FBP). In terms of biological role, key enzyme in the regulation of glycerol uptake and metabolism. Catalyzes the phosphorylation of glycerol to yield sn-glycerol 3-phosphate. The polypeptide is Glycerol kinase (Alkaliphilus metalliredigens (strain QYMF)).